We begin with the raw amino-acid sequence, 345 residues long: NADPH dehydrogenase (345 aa).

23–26 (SPMC) is an FMN binding site. Tyr-28 is a substrate binding site. The FMN site is built by Ala-60 and Gln-102. 164-167 (HGAH) contacts substrate. FMN contacts are provided by residues Arg-215 and 307–308 (GR).

This sequence belongs to the NADH:flavin oxidoreductase/NADH oxidase family. NamA subfamily. Homotetramer. It depends on FMN as a cofactor.

It carries out the reaction A + NADPH + H(+) = AH2 + NADP(+). Its function is as follows. Catalyzes the reduction of the double bond of an array of alpha,beta-unsaturated aldehydes and ketones. It also reduces the nitro group of nitroester and nitroaromatic compounds. It could have a role in detoxification processes. The polypeptide is NADPH dehydrogenase (Bacillus mycoides (strain KBAB4) (Bacillus weihenstephanensis)).